The primary structure comprises 286 residues: Polyamine aminopropyltransferase (286 aa).

The PABS domain maps to 5–238; sequence TMWHETLHDQ…GIMTFAWATN (234 aa). Q33 is an S-methyl-5'-thioadenosine binding site. Spermidine is bound by residues H64 and D88. S-methyl-5'-thioadenosine is bound by residues E108 and 140-141; that span reads DG. Catalysis depends on D158, which acts as the Proton acceptor. 158–161 serves as a coordination point for spermidine; sequence DCTD. P165 contributes to the S-methyl-5'-thioadenosine binding site.

This sequence belongs to the spermidine/spermine synthase family. In terms of assembly, homodimer or homotetramer.

The protein resides in the cytoplasm. The enzyme catalyses S-adenosyl 3-(methylsulfanyl)propylamine + putrescine = S-methyl-5'-thioadenosine + spermidine + H(+). Its pathway is amine and polyamine biosynthesis; spermidine biosynthesis; spermidine from putrescine: step 1/1. Its function is as follows. Catalyzes the irreversible transfer of a propylamine group from the amino donor S-adenosylmethioninamine (decarboxy-AdoMet) to putrescine (1,4-diaminobutane) to yield spermidine. This Salmonella paratyphi B (strain ATCC BAA-1250 / SPB7) protein is Polyamine aminopropyltransferase.